The chain runs to 338 residues: tRNA N6-adenosine threonylcarbamoyltransferase (338 aa).

Fe cation-binding residues include histidine 111 and histidine 115. Substrate-binding positions include 134–138, aspartate 167, glycine 180, and asparagine 272; that span reads LVSGG. Residue aspartate 300 participates in Fe cation binding.

The protein belongs to the KAE1 / TsaD family. The cofactor is Fe(2+).

The protein localises to the cytoplasm. The catalysed reaction is L-threonylcarbamoyladenylate + adenosine(37) in tRNA = N(6)-L-threonylcarbamoyladenosine(37) in tRNA + AMP + H(+). Functionally, required for the formation of a threonylcarbamoyl group on adenosine at position 37 (t(6)A37) in tRNAs that read codons beginning with adenine. Is involved in the transfer of the threonylcarbamoyl moiety of threonylcarbamoyl-AMP (TC-AMP) to the N6 group of A37, together with TsaE and TsaB. TsaD likely plays a direct catalytic role in this reaction. The polypeptide is tRNA N6-adenosine threonylcarbamoyltransferase (Aliivibrio fischeri (strain MJ11) (Vibrio fischeri)).